A 154-amino-acid chain; its full sequence is Transcriptional repressor NrdR (154 aa).

The segment at 3 to 34 is a zinc-finger region; that stretch reads CPFCGANDTKVIDSRLVAEGEQVRRRRECLAC. The 91-residue stretch at 49-139 folds into the ATP-cone domain; the sequence is PRLIKQDGSR…VYRRFQDLNE (91 aa).

This sequence belongs to the NrdR family. Requires Zn(2+) as cofactor.

Negatively regulates transcription of bacterial ribonucleotide reductase nrd genes and operons by binding to NrdR-boxes. In Pseudomonas savastanoi pv. phaseolicola (strain 1448A / Race 6) (Pseudomonas syringae pv. phaseolicola (strain 1448A / Race 6)), this protein is Transcriptional repressor NrdR.